We begin with the raw amino-acid sequence, 215 residues long: Autophagy-related protein 101 (215 aa).

The disordered stretch occupies residues 124-147 (PVGKSHHSKLVMDPGEASEERSSR).

It belongs to the ATG101 family. In terms of assembly, interacts with ATG11 and ATG13A.

It localises to the cytoplasmic vesicle. The protein localises to the autophagosome. Functionally, accessory protein involved in autophagy. Acts as a scaffold protein of the ATG1-ATG13 complex for faithful delivery of autophagic vesicles to the vacuole. Required for selective mitophagy. This is Autophagy-related protein 101 from Arabidopsis thaliana (Mouse-ear cress).